Consider the following 465-residue polypeptide: 23S rRNA (uracil(1939)-C(5))-methyltransferase RlmD (465 aa).

The segment at 1–22 (MSEAVPTSARKSKNAPVAPGPA) is disordered. The 65-residue stretch at 16-80 (PVAPGPAPVL…PSYEQATVVD (65 aa)) folds into the TRAM domain. C93, C99, C102, and C181 together coordinate [4Fe-4S] cluster. Q289, F318, N323, E339, N367, and D388 together coordinate S-adenosyl-L-methionine. The Nucleophile role is filled by C421.

It belongs to the class I-like SAM-binding methyltransferase superfamily. RNA M5U methyltransferase family. RlmD subfamily.

It carries out the reaction uridine(1939) in 23S rRNA + S-adenosyl-L-methionine = 5-methyluridine(1939) in 23S rRNA + S-adenosyl-L-homocysteine + H(+). Its function is as follows. Catalyzes the formation of 5-methyl-uridine at position 1939 (m5U1939) in 23S rRNA. The sequence is that of 23S rRNA (uracil(1939)-C(5))-methyltransferase RlmD from Burkholderia cenocepacia (strain HI2424).